The chain runs to 253 residues: Phosphoribosylaminoimidazole-succinocarboxamide synthase (253 aa).

This sequence belongs to the SAICAR synthetase family.

It catalyses the reaction 5-amino-1-(5-phospho-D-ribosyl)imidazole-4-carboxylate + L-aspartate + ATP = (2S)-2-[5-amino-1-(5-phospho-beta-D-ribosyl)imidazole-4-carboxamido]succinate + ADP + phosphate + 2 H(+). It functions in the pathway purine metabolism; IMP biosynthesis via de novo pathway; 5-amino-1-(5-phospho-D-ribosyl)imidazole-4-carboxamide from 5-amino-1-(5-phospho-D-ribosyl)imidazole-4-carboxylate: step 1/2. The polypeptide is Phosphoribosylaminoimidazole-succinocarboxamide synthase (Roseobacter denitrificans (strain ATCC 33942 / OCh 114) (Erythrobacter sp. (strain OCh 114))).